The following is a 156-amino-acid chain: Peptidyl-prolyl cis-trans isomerase H (156 aa).

In terms of domain architecture, PPIase cyclophilin-type spans 1–155; that stretch reads TPAGRLKCEL…MAVRITQCGE (155 aa).

The protein belongs to the cyclophilin-type PPIase family. PPIase H subfamily.

It localises to the nucleus. It carries out the reaction [protein]-peptidylproline (omega=180) = [protein]-peptidylproline (omega=0). Functionally, PPIases accelerate the folding of proteins. It catalyzes the cis-trans isomerization of proline imidic peptide bonds in oligopeptides. In Mycosarcoma maydis (Corn smut fungus), this protein is Peptidyl-prolyl cis-trans isomerase H (CYP3).